A 171-amino-acid chain; its full sequence is bZIP transcription factor 2 (171 aa).

Low complexity predominate over residues 1–24 (MASSSSTYRSSSSSDGGNNNPSDS). The tract at residues 1-54 (MASSSSTYRSSSSSDGGNNNPSDSVVTVDERKRKRMLSNRESARRSRMRKQKHV) is disordered. One can recognise a bZIP domain in the interval 29-92 (DERKRKRMLS…MKIQAENSVL (64 aa)). The interval 31-52 (RKRKRMLSNRESARRSRMRKQK) is basic motif. Positions 57-71 (LTAQINQLSNDNRQI) are leucine-zipper.

As to quaternary structure, forms heterodimers with BZIP9, BZIP10, BZIP25 and BZIP63. Component of a ternary complex composed of BZIP2-BZIP63 heterodimer and KIN10.

Its subcellular location is the nucleus. In terms of biological role, transcription factor that binds to specific DNA sequences in target gene promoters. BZIP2-BZIP63-KIN10 complex binds to the ETFQO promoter to up-regulate its transcription. This chain is bZIP transcription factor 2, found in Arabidopsis thaliana (Mouse-ear cress).